The following is a 131-amino-acid chain: Meiotically up-regulated gene 115 protein (131 aa).

Its subcellular location is the mitochondrion. It localises to the nucleus. Functionally, has a role in meiosis. This is Meiotically up-regulated gene 115 protein (mug115) from Schizosaccharomyces pombe (strain 972 / ATCC 24843) (Fission yeast).